Here is a 666-residue protein sequence, read N- to C-terminus: tRNA 5-methylaminomethyl-2-thiouridine biosynthesis bifunctional protein MnmC (666 aa).

The tract at residues 1–245 is tRNA (mnm(5)s(2)U34)-methyltransferase; it reads MKQYAIQPAT…KREMLCGVME (245 aa). The FAD-dependent cmnm(5)s(2)U34 oxidoreductase stretch occupies residues 270–666; it reads IGGGIASALL…RKLLKGKAVK (397 aa).

It in the N-terminal section; belongs to the methyltransferase superfamily. tRNA (mnm(5)s(2)U34)-methyltransferase family. The protein in the C-terminal section; belongs to the DAO family. Requires FAD as cofactor.

It is found in the cytoplasm. It catalyses the reaction 5-aminomethyl-2-thiouridine(34) in tRNA + S-adenosyl-L-methionine = 5-methylaminomethyl-2-thiouridine(34) in tRNA + S-adenosyl-L-homocysteine + H(+). Functionally, catalyzes the last two steps in the biosynthesis of 5-methylaminomethyl-2-thiouridine (mnm(5)s(2)U) at the wobble position (U34) in tRNA. Catalyzes the FAD-dependent demodification of cmnm(5)s(2)U34 to nm(5)s(2)U34, followed by the transfer of a methyl group from S-adenosyl-L-methionine to nm(5)s(2)U34, to form mnm(5)s(2)U34. This Salmonella choleraesuis (strain SC-B67) protein is tRNA 5-methylaminomethyl-2-thiouridine biosynthesis bifunctional protein MnmC.